Here is a 640-residue protein sequence, read N- to C-terminus: Preterminal protein (640 aa).

Residues 232–257 (PSQEGEGEERENPDRASSRPRPQETV) form a disordered region. The Nuclear localization signal signature appears at 351 to 360 (RLPVRRRRRR). Ser-549 bears the O-(5'-phospho-DNA)-serine mark. Residues 614 to 640 (GADVPLPAMPPGPEPPLPPGARPRHRF) are disordered. The segment covering 620–634 (PAMPPGPEPPLPPGA) has biased composition (pro residues).

It belongs to the adenoviridae terminal protein family. As to quaternary structure, heterodimer with the polymerase; this heterodimer binds to bp 9 to 18 of the genome. Interacts with host POU2F1; POU2F1 binds to the auxiliary sequences in the inverted terminal repeats and tethers the pTP-POL heterodimer to the origin DNA thereby participating in the assembly of the pre-initiation complex (POL-TP-DBP-NFIA-POU2F1). In terms of processing, preterminal protein is used to replicate viral genome, upon genomic encapsidation it is processed first into iTP and finally into TP by adenovirus protease.

The protein resides in the host nucleus matrix. Its function is as follows. Protein covalently bound to the viral DNA that acts as a primer for viral genomic replication by DNA strand displacement. Assembles on the viral origin of replication in an initiation complex with viral polymerase, DBP, host NFIA and host POU2F1/OCT1. During initiation, the polymerase covalently couples the first dCTP with Ser-580 of pTP. The terminal protein stimulates the template activity over 20 fold compared to protein-free templates. Neo-synthesized viral genomes are linked to two preterminal proteins, one for each 5' end. These new genomes are encapsidated in the nucleus, and during capsid maturation by viral protease, preterminal protein is first cleaved into intermediary (iTP), then into mature TP. May play a role in host nuclear matrix localization of genomic DNA. The polypeptide is Preterminal protein (Human adenovirus B serotype 7 (HAdV-7)).